The primary structure comprises 354 residues: MAAECGSGNCDAWAARDPSGILSPYKFNRREVQSEDVSLRITHCGVCYADVIWTRNMFNDSIYPLVPGHEIAGVVTEVGADVKGFKVGDHVGVGVYVNSCQDCENCNSSLENHCSKCVVTYNSVDSDGTVTKGGYSSHILVHQRYCFKIPADYPLSKAAPLLCAGITVYTPMIRHNMNQPGKSLGVIGLGGLGHMAVKFGKAFGLKVTVFSTSESKREEAINLLGADNFVISSDENQMESLKSSLHFIIDTASGDHQFDPYLSLLKVGGVMVLLSFPSEIKVHPENLNLAARSLAGSVTGGTKDIQEMINFCAANNVYPDIEMIKIDYVNEALQRLINRDVRFRFVIDIENSFK.

Positions 47, 69, 70, 100, 103, 106, 114, and 163 each coordinate Zn(2+). NADP(+) contacts are provided by residues threonine 167, 188–193 (GLGGLG), 211–216 (STSESK), threonine 251, and 297–299 (SVT).

Belongs to the zinc-containing alcohol dehydrogenase family. In terms of assembly, homodimer. The cofactor is Zn(2+).

The catalysed reaction is (E)-cinnamyl alcohol + NADP(+) = (E)-cinnamaldehyde + NADPH + H(+). The enzyme catalyses (E)-coniferol + NADP(+) = (E)-coniferaldehyde + NADPH + H(+). It catalyses the reaction (E)-sinapyl alcohol + NADP(+) = (E)-sinapaldehyde + NADPH + H(+). It carries out the reaction (E)-4-coumaroyl alcohol + NADP(+) = (E)-4-coumaraldehyde + NADPH + H(+). The catalysed reaction is (E)-caffeyl alcohol + NADP(+) = (E)-caffeyl aldehyde + NADPH + H(+). Its pathway is aromatic compound metabolism; phenylpropanoid biosynthesis. In terms of biological role, involved in lignin biosynthesis. Catalyzes the final step specific for the production of lignin monomers. Catalyzes the NADPH-dependent reduction of coniferaldehyde, 5-hydroxyconiferaldehyde, sinapaldehyde, 4-coumaraldehyde and caffeyl aldehyde to their respective alcohols. The sequence is that of Putative cinnamyl alcohol dehydrogenase 4 from Oryza sativa subsp. japonica (Rice).